Here is a 630-residue protein sequence, read N- to C-terminus: ATP synthase subunit alpha (630 aa).

173-180 (GDRQTGKT) is an ATP binding site. Residues 592–630 (AGGASTAADEDGAGDDEEEAPAPKAKSKNAKSASKAKEK) are disordered. The segment covering 599–611 (ADEDGAGDDEEEA) has biased composition (acidic residues).

Belongs to the ATPase alpha/beta chains family. In terms of assembly, F-type ATPases have 2 components, CF(1) - the catalytic core - and CF(0) - the membrane proton channel. CF(1) has five subunits: alpha(3), beta(3), gamma(1), delta(1), epsilon(1). CF(0) has three main subunits: a(1), b(2) and c(9-12). The alpha and beta chains form an alternating ring which encloses part of the gamma chain. CF(1) is attached to CF(0) by a central stalk formed by the gamma and epsilon chains, while a peripheral stalk is formed by the delta and b chains.

It is found in the cell inner membrane. The catalysed reaction is ATP + H2O + 4 H(+)(in) = ADP + phosphate + 5 H(+)(out). In terms of biological role, produces ATP from ADP in the presence of a proton gradient across the membrane. The alpha chain is a regulatory subunit. This is ATP synthase subunit alpha from Sorangium cellulosum (strain So ce56) (Polyangium cellulosum (strain So ce56)).